Consider the following 215-residue polypeptide: MNKVYDWFEERLEVQAIADDISSKYVPPHVNIFYCFGGLVLTCFLIQVATGFAMTFYYRPSVVDAFASVEYIMTSVNFGWLIRSIHRWSASMMVLMMVLHVFRVYLTGGFKKPRELTWVTGVTLSVVTVSFGVTGYSLPWDQVGFWACKIVTGVPAAVPIVGEPLVLILRGGESVGQSTLTRFYSAHTFVLPLAAAVLMLTHFLMIRKQGISGPL.

Residues 32 to 52 form a helical membrane-spanning segment; that stretch reads IFYCFGGLVLTCFLIQVATGF. Residue Cys-35 coordinates heme c. Heme b is bound by residues His-86 and His-100. Helical transmembrane passes span 90 to 110, 116 to 136, and 186 to 206; these read ASMM…TGGF, LTWV…VTGY, and AHTF…FLMI. Positions 187 and 202 each coordinate heme b.

It belongs to the cytochrome b family. PetB subfamily. The 4 large subunits of the cytochrome b6-f complex are cytochrome b6, subunit IV (17 kDa polypeptide, PetD), cytochrome f and the Rieske protein, while the 4 small subunits are PetG, PetL, PetM and PetN. The complex functions as a dimer. The cofactor is heme b. Requires heme c as cofactor.

The protein resides in the plastid. It localises to the chloroplast thylakoid membrane. Its function is as follows. Component of the cytochrome b6-f complex, which mediates electron transfer between photosystem II (PSII) and photosystem I (PSI), cyclic electron flow around PSI, and state transitions. In Phaeodactylum tricornutum (strain CCAP 1055/1), this protein is Cytochrome b6.